Here is a 411-residue protein sequence, read N- to C-terminus: MELSSVSSFSLGTNPFISIPHNNNNLKVSSYCCKSKSRVINSTNSKHCSPNNNNNTSNKTTHLLGLYGQSRCLLKPLSFISCNDQRGNSIRASAQIEDRPPESGNLSALTNVKDFVSVCWEYVRPYTAKGVIICSSCLFGRELLENPNLFSRPLIFRALLGMLAILGSCFYTAGINQIFDMDIDRINKPDLPLVSGRISVESAWLLTLSPAIIGFILILKLNSGPLLTSLYCLAILSGTIYSVPPFRWKKNPITAFLCILMIHAGLNFSVYYASRAALGLAFAWSPSFSFITAFITFMTLTLASSKDLSDINGDRKFGVETFATKLGAKNITLLGTGLLLLNYVAAISTAIIWPKAFKSNIMLLSHAILAFSLIFQARELDRTNYTPEACKSFYEFIWILFSAEYVVYLFI.

The N-terminal 91 residues, 1 to 91 (MELSSVSSFS…CNDQRGNSIR (91 aa)), are a transit peptide targeting the chloroplast. A run of 8 helical transmembrane segments spans residues 159 to 179 (LLGMLAILGSCFYTAGINQIF), 198 to 218 (ISVESAWLLTLSPAIIGFILI), 226 to 246 (LLTSLYCLAILSGTIYSVPPF), 253 to 273 (ITAFLCILMIHAGLNFSVYYA), 278 to 298 (LGLAFAWSPSFSFITAFITFM), 333 to 353 (LLGTGLLLLNYVAAISTAIIW), 356 to 376 (AFKSNIMLLSHAILAFSLIFQ), and 391 to 411 (KSFYEFIWILFSAEYVVYLFI).

Belongs to the UbiA prenyltransferase family. Mg(2+) is required as a cofactor. As to expression, expressed in glandular trichomes called lupulin glands, and in early stage and mature cones. Detected in leaves, but not in root, stem and first stage of flowers. No expression in male flowers.

Its subcellular location is the plastid. The protein localises to the chloroplast membrane. It catalyses the reaction a 2-acylphloroglucinol + dimethylallyl diphosphate = a 2-acyl-4-prenylphloroglucinol + diphosphate. The protein operates within secondary metabolite biosynthesis. Functionally, involved in the biosynthesis of prenylated phenolics natural products which contribute to the bitter taste of beer and display broad biological activities. Catalyzes the first prenylation step in the beta-bitter acid pathway. Abble to transfer dimethylallyl diphosphate (DMAPP) or geranyl diphosphate (GPP) to phlorisovalerophenone (PIVP), phlorisobutrylphenone (PIMP) and naringenin chalcone. Can also use phlorisobutyrophenone (PIBP) and phlormethylbutanophenone (PMBP) as substrates, but not 6'-O-methylated chalcone or naringenin. The chain is 2-acylphloroglucinol 4-prenyltransferase, chloroplastic from Humulus lupulus (European hop).